We begin with the raw amino-acid sequence, 128 residues long: Flagellar basal body rod protein FlgB (128 aa).

This sequence belongs to the flagella basal body rod proteins family. As to quaternary structure, the basal body constitutes a major portion of the flagellar organelle and consists of a number of rings mounted on a central rod. In Gram-negative bacteria, at least four rings, L, P, S and M are present, whereas Gram-positive bacteria lack the L and P rings. The rod consists of about 26 subunits of FlgG in the distal portion, and FlgB, FlgC and FlgF build up the proximal portion of the rod with about 6 subunits each. Rod assembly occurs by export via the flagellum-specific pathway of its constituent proteins and by their incorporation into the rod structure in the probable order of FlgB, FlgC, FlgF and FlgG. Another protein, FliE, also assembles onto the stable rod structure.

It localises to the bacterial flagellum basal body. Functionally, structural component of flagellum, the bacterial motility apparatus. Part of the rod structure of flagellar basal body. This is Flagellar basal body rod protein FlgB from Cereibacter sphaeroides (strain ATCC 17023 / DSM 158 / JCM 6121 / CCUG 31486 / LMG 2827 / NBRC 12203 / NCIMB 8253 / ATH 2.4.1.) (Rhodobacter sphaeroides).